We begin with the raw amino-acid sequence, 109 residues long: uncharacterized protein (109 aa).

Residues 26 to 48 (VTSIMTVSDINYLLLYLIILLTL) form a helical membrane-spanning segment.

It localises to the membrane. This is an uncharacterized protein from Saccharomyces cerevisiae (strain ATCC 204508 / S288c) (Baker's yeast).